Reading from the N-terminus, the 404-residue chain is Homoserine O-succinyltransferase (404 aa).

A compositionally biased stretch (low complexity) spans methionine 1–alanine 25. Residues methionine 1–proline 30 are disordered. In terms of domain architecture, AB hydrolase-1 spans asparagine 75–aspartate 384. Residue serine 179 is the Nucleophile of the active site. Arginine 249 contacts substrate. Active-site residues include aspartate 344 and histidine 377. Aspartate 378 lines the substrate pocket.

Belongs to the AB hydrolase superfamily. MetX family. In terms of assembly, homodimer.

It localises to the cytoplasm. The catalysed reaction is L-homoserine + succinyl-CoA = O-succinyl-L-homoserine + CoA. It functions in the pathway amino-acid biosynthesis; L-methionine biosynthesis via de novo pathway; O-succinyl-L-homoserine from L-homoserine: step 1/1. Functionally, transfers a succinyl group from succinyl-CoA to L-homoserine, forming succinyl-L-homoserine. The protein is Homoserine O-succinyltransferase of Ralstonia pickettii (strain 12J).